The primary structure comprises 561 residues: DNA ligase B (561 aa).

K128 acts as the N6-AMP-lysine intermediate in catalysis.

The protein belongs to the NAD-dependent DNA ligase family. LigB subfamily.

It catalyses the reaction NAD(+) + (deoxyribonucleotide)n-3'-hydroxyl + 5'-phospho-(deoxyribonucleotide)m = (deoxyribonucleotide)n+m + AMP + beta-nicotinamide D-nucleotide.. Functionally, catalyzes the formation of phosphodiester linkages between 5'-phosphoryl and 3'-hydroxyl groups in double-stranded DNA using NAD as a coenzyme and as the energy source for the reaction. This chain is DNA ligase B, found in Pseudomonas syringae pv. tomato (strain ATCC BAA-871 / DC3000).